We begin with the raw amino-acid sequence, 596 residues long: Elongation factor 4 (596 aa).

The region spanning 2-184 (KNIRNFAIIA…SIVKYIPPPE (183 aa)) is the tr-type G domain. GTP contacts are provided by residues 14 to 19 (DHGKST) and 131 to 134 (NKID).

Belongs to the TRAFAC class translation factor GTPase superfamily. Classic translation factor GTPase family. LepA subfamily.

The protein localises to the cell inner membrane. It carries out the reaction GTP + H2O = GDP + phosphate + H(+). Required for accurate and efficient protein synthesis under certain stress conditions. May act as a fidelity factor of the translation reaction, by catalyzing a one-codon backward translocation of tRNAs on improperly translocated ribosomes. Back-translocation proceeds from a post-translocation (POST) complex to a pre-translocation (PRE) complex, thus giving elongation factor G a second chance to translocate the tRNAs correctly. Binds to ribosomes in a GTP-dependent manner. This is Elongation factor 4 from Neorickettsia sennetsu (strain ATCC VR-367 / Miyayama) (Ehrlichia sennetsu).